The primary structure comprises 459 residues: MRAEWIAKRRGQSNVSQMHYARQGVITEEMHYVANRENLPVDLIRDEVARGRMIIPANINHVNLEPMCIGIASQCKVNANIGASPNSSDINEELEKLRLAVKYGADTVMDLSTGGGDLDTIRTAIINDSPVPIGTVPIYQALESVHGRIENLTPDDFLHIIEKHAQQGVDYMTIHAGILMEYLPLVRNRLTGIVSRGGGIIAKWMLHHHKQNPLYTHFDDIIEIFKKYDVSFSLGDSLRPGCLHDASDEAQLSELKTLGQLTRRAWEHDVQVMVEGPGHVPMDQIEFNVKKQMEECSEAPFYVLGPLVTDIAPGYDHITSAIGAAMAGWYGTAMLCYVTPKEHLGLPNAEDVRNGLIAYKIAAHAADVARHRQGARDRDDQLSNARYNFDWNRQFELSLDPDRAKEYHDETLPADIYKTAEFCSMCGPKFCPMQTKVDADALTELEKFLAKDKETVSQS.

Substrate is bound by residues asparagine 80, methionine 109, tyrosine 139, histidine 175, 195–197 (SRG), 236–239 (DSLR), and glutamate 275. Position 279 (histidine 279) interacts with Zn(2+). Substrate is bound at residue tyrosine 302. Histidine 343 lines the Zn(2+) pocket. [4Fe-4S] cluster-binding residues include cysteine 423, cysteine 426, and cysteine 431.

Belongs to the ThiC family. [4Fe-4S] cluster serves as cofactor.

It carries out the reaction 5-amino-1-(5-phospho-beta-D-ribosyl)imidazole + S-adenosyl-L-methionine = 4-amino-2-methyl-5-(phosphooxymethyl)pyrimidine + CO + 5'-deoxyadenosine + formate + L-methionine + 3 H(+). Its pathway is cofactor biosynthesis; thiamine diphosphate biosynthesis. Catalyzes the synthesis of the hydroxymethylpyrimidine phosphate (HMP-P) moiety of thiamine from aminoimidazole ribotide (AIR) in a radical S-adenosyl-L-methionine (SAM)-dependent reaction. The chain is Phosphomethylpyrimidine synthase from Gloeothece citriformis (strain PCC 7424) (Cyanothece sp. (strain PCC 7424)).